The following is a 390-amino-acid chain: Magnesium-protoporphyrin IX monomethyl ester [oxidative] cyclase (390 aa).

Belongs to the AcsF family. It depends on Fe cation as a cofactor.

It catalyses the reaction Mg-protoporphyrin IX 13-monomethyl ester + 3 NADPH + 3 O2 + 2 H(+) = 3,8-divinyl protochlorophyllide a + 3 NADP(+) + 5 H2O. The protein operates within porphyrin-containing compound metabolism; chlorophyll biosynthesis (light-independent). In terms of biological role, catalyzes the formation of the isocyclic ring in chlorophyll biosynthesis. Mediates the cyclase reaction, which results in the formation of divinylprotochlorophyllide (Pchlide) characteristic of all chlorophylls from magnesium-protoporphyrin IX 13-monomethyl ester (MgPMME). The chain is Magnesium-protoporphyrin IX monomethyl ester [oxidative] cyclase from Prochlorococcus marinus (strain MIT 9312).